A 330-amino-acid polypeptide reads, in one-letter code: Ketol-acid reductoisomerase (NADP(+)) (330 aa).

Residues 1 to 181 (MKVYYEQDAT…GGARSGVIET (181 aa)) form the KARI N-terminal Rossmann domain. NADP(+) is bound by residues 24-27 (YGSQ), arginine 47, and 82-85 (DQVQ). Residue histidine 107 is part of the active site. Glycine 133 is an NADP(+) binding site. Positions 182 to 327 (TFKEETETDL…GKLRGMMPWL (146 aa)) constitute a KARI C-terminal knotted domain. The Mg(2+) site is built by aspartate 190, glutamate 194, glutamate 226, and glutamate 230. Serine 251 lines the substrate pocket.

Belongs to the ketol-acid reductoisomerase family. Requires Mg(2+) as cofactor.

It catalyses the reaction (2R)-2,3-dihydroxy-3-methylbutanoate + NADP(+) = (2S)-2-acetolactate + NADPH + H(+). The catalysed reaction is (2R,3R)-2,3-dihydroxy-3-methylpentanoate + NADP(+) = (S)-2-ethyl-2-hydroxy-3-oxobutanoate + NADPH + H(+). The protein operates within amino-acid biosynthesis; L-isoleucine biosynthesis; L-isoleucine from 2-oxobutanoate: step 2/4. It functions in the pathway amino-acid biosynthesis; L-valine biosynthesis; L-valine from pyruvate: step 2/4. In terms of biological role, involved in the biosynthesis of branched-chain amino acids (BCAA). Catalyzes an alkyl-migration followed by a ketol-acid reduction of (S)-2-acetolactate (S2AL) to yield (R)-2,3-dihydroxy-isovalerate. In the isomerase reaction, S2AL is rearranged via a Mg-dependent methyl migration to produce 3-hydroxy-3-methyl-2-ketobutyrate (HMKB). In the reductase reaction, this 2-ketoacid undergoes a metal-dependent reduction by NADPH to yield (R)-2,3-dihydroxy-isovalerate. The sequence is that of Ketol-acid reductoisomerase (NADP(+)) from Nitratidesulfovibrio vulgaris (strain DSM 19637 / Miyazaki F) (Desulfovibrio vulgaris).